A 923-amino-acid chain; its full sequence is Hexokinase-3 (923 aa).

A compositionally biased stretch (polar residues) spans 1 to 18; sequence MDSIGSSGLRQGEETLSC. The interval 1–30 is disordered; it reads MDSIGSSGLRQGEETLSCSEEGLPGPSDSS. 2 Hexokinase domains span residues 27–471 and 477–912; these read SDSS…MVTA and AAHR…LVTA. The segment at 84-220 is hexokinase small subdomain 1; it reads HGTEQGDFVV…AYNIDVVAVV (137 aa). An ATP-binding site is contributed by 95-102; it reads ELGATGAS. A D-glucose 6-phosphate-binding site is contributed by 95–104; sequence ELGATGASLR. Residues Ser168, 185–186, and 221–222 contribute to the D-glucose site; these read TK and ND. The interval 221–460 is hexokinase large subdomain 1; it reads NDTVGTMMGC…CDVSLIPSVD (240 aa). Asp222 and Thr245 together coordinate D-glucose 6-phosphate. Residues Asn248, Glu273, and 304 to 307 each bind D-glucose; that span reads QRFE. 426 to 428 contributes to the D-glucose 6-phosphate binding site; that stretch reads GGR. Residues 438-439 and 542-547 each bind ATP; these read SV and DLGGTN. Positions 531–661 are hexokinase small subdomain 2; sequence DGSERGDFLA…AVELNVVAIV (131 aa). 542 to 546 is a D-glucose 6-phosphate binding site; that stretch reads DLGGT. Residues 609 to 610, 626 to 627, and 662 to 663 contribute to the D-glucose site; these read SF, TK, and ND. A hexokinase large subdomain 2 region spans residues 662–901; that stretch reads NDTVGTMMSC…CVVTFLQSED (240 aa). D-glucose 6-phosphate contacts are provided by Asp663 and Thr686. Residue Thr686 coordinates ATP. Residues 688–689, Glu714, and Glu748 each bind D-glucose; that span reads TN. Residues 753-754, 790-794, and 869-873 each bind ATP; these read GM, TKFLS, and TLYKL. Residues 867–869 and Ser903 each bind D-glucose 6-phosphate; that span reads DGT.

This sequence belongs to the hexokinase family.

The catalysed reaction is a D-hexose + ATP = a D-hexose 6-phosphate + ADP + H(+). It carries out the reaction D-fructose + ATP = D-fructose 6-phosphate + ADP + H(+). The enzyme catalyses D-glucose + ATP = D-glucose 6-phosphate + ADP + H(+). It participates in carbohydrate metabolism; hexose metabolism. The protein operates within carbohydrate degradation; glycolysis; D-glyceraldehyde 3-phosphate and glycerone phosphate from D-glucose: step 1/4. Its activity is regulated as follows. Hexokinase is an allosteric enzyme inhibited by its product D-glucose 6-phosphate. Its function is as follows. Catalyzes the phosphorylation of hexose, such as D-glucose and D-fructose, to hexose 6-phosphate (D-glucose 6-phosphate and D-fructose 6-phosphate, respectively). Mediates the initial step of glycolysis by catalyzing phosphorylation of D-glucose to D-glucose 6-phosphate. In Homo sapiens (Human), this protein is Hexokinase-3.